The following is a 488-amino-acid chain: 3-octaprenyl-4-hydroxybenzoate carboxy-lyase (488 aa).

Asn172 serves as a coordination point for Mn(2+). Prenylated FMN-binding positions include 175-177 (IYR), 189-191 (RWL), and 194-195 (RG). Glu238 is a Mn(2+) binding site. Asp287 acts as the Proton donor in catalysis.

Belongs to the UbiD family. Homohexamer. The cofactor is prenylated FMN. Mn(2+) serves as cofactor.

The protein resides in the cell membrane. The catalysed reaction is a 4-hydroxy-3-(all-trans-polyprenyl)benzoate + H(+) = a 2-(all-trans-polyprenyl)phenol + CO2. It participates in cofactor biosynthesis; ubiquinone biosynthesis. Its function is as follows. Catalyzes the decarboxylation of 3-octaprenyl-4-hydroxy benzoate to 2-octaprenylphenol, an intermediate step in ubiquinone biosynthesis. This Legionella pneumophila subsp. pneumophila (strain Philadelphia 1 / ATCC 33152 / DSM 7513) protein is 3-octaprenyl-4-hydroxybenzoate carboxy-lyase.